The primary structure comprises 164 residues: UPF0303 protein RHE_CH02903 (164 aa).

This sequence belongs to the UPF0303 family.

The protein is UPF0303 protein RHE_CH02903 of Rhizobium etli (strain ATCC 51251 / DSM 11541 / JCM 21823 / NBRC 15573 / CFN 42).